Reading from the N-terminus, the 470-residue chain is 6-phospho-beta-galactosidase (470 aa).

D-galactose 6-phosphate is bound by residues Q19, H116, N159, E160, and N297. E160 (proton donor) is an active-site residue. The active-site Nucleophile is the E375. D-galactose 6-phosphate is bound by residues S430, W431, K437, and Y439.

It belongs to the glycosyl hydrolase 1 family.

The enzyme catalyses a 6-phospho-beta-D-galactoside + H2O = D-galactose 6-phosphate + an alcohol. It participates in carbohydrate metabolism; lactose degradation; D-galactose 6-phosphate and beta-D-glucose from lactose 6-phosphate: step 1/1. The protein is 6-phospho-beta-galactosidase of Staphylococcus aureus (strain USA300).